We begin with the raw amino-acid sequence, 115 residues long: Cyclin-dependent kinase 2-associated protein 1 (115 aa).

The segment at 20-25 (GSVHSP) is interaction with CDK2AP2. Ser-46 bears the Phosphoserine; by IKKE mark.

The protein belongs to the CDK2AP family. As to quaternary structure, homodimer. Component of the nucleosome remodeling and deacetylase (NuRD) repressor complex, composed of core proteins MTA1, MTA2, MTA3, RBBP4, RBBP7, HDAC1, HDAC2, MBD2, MBD3, and peripherally associated proteins CDK2AP1, CDK2AP2, GATAD2A, GATAD2B, CHD3, CHD4 and CHD5. The exact stoichiometry of the NuRD complex is unknown, and some subunits such as MBD2 and MBD3, GATAD2A and GATAD2B, and CHD3, CHD4 and CHD5 define mutually exclusive NuRD complexes. Interacts with monomeric unphosphorylated CDK2. Interacts with CDK2AP2. Interacts with GATAD2A. Interacts with HDAC1. Interacts with HDAC2. Interacts with MBD2. Interacts with MBD3. Interacts with RBBP4. Interacts with RBBP7. In terms of processing, phosphorylated in vitro by IKBKE at Ser-46.

It is found in the nucleus. The protein resides in the chromosome. In terms of biological role, inhibitor of cyclin-dependent kinase CDK2. Also acts as a component of the histone deacetylase NuRD complex which participates in the remodeling of chromatin. The polypeptide is Cyclin-dependent kinase 2-associated protein 1 (CDK2AP1) (Homo sapiens (Human)).